The sequence spans 319 residues: Phosphate acyltransferase (319 aa).

This sequence belongs to the PlsX family. In terms of assembly, homodimer. Probably interacts with PlsY.

It is found in the cytoplasm. The enzyme catalyses a fatty acyl-[ACP] + phosphate = an acyl phosphate + holo-[ACP]. It functions in the pathway lipid metabolism; phospholipid metabolism. In terms of biological role, catalyzes the reversible formation of acyl-phosphate (acyl-PO(4)) from acyl-[acyl-carrier-protein] (acyl-ACP). This enzyme utilizes acyl-ACP as fatty acyl donor, but not acyl-CoA. The protein is Phosphate acyltransferase of Chlamydia muridarum (strain MoPn / Nigg).